A 509-amino-acid chain; its full sequence is Maturase K (509 aa).

This sequence belongs to the intron maturase 2 family. MatK subfamily.

It localises to the plastid. The protein localises to the chloroplast. Its function is as follows. Usually encoded in the trnK tRNA gene intron. Probably assists in splicing its own and other chloroplast group II introns. The sequence is that of Maturase K from Nicotiana paniculata.